The sequence spans 562 residues: 2-succinyl-5-enolpyruvyl-6-hydroxy-3-cyclohexene-1-carboxylate synthase (562 aa).

Belongs to the TPP enzyme family. MenD subfamily. As to quaternary structure, homodimer. It depends on Mg(2+) as a cofactor. Mn(2+) serves as cofactor. Requires thiamine diphosphate as cofactor.

The catalysed reaction is isochorismate + 2-oxoglutarate + H(+) = 5-enolpyruvoyl-6-hydroxy-2-succinyl-cyclohex-3-ene-1-carboxylate + CO2. The protein operates within quinol/quinone metabolism; 1,4-dihydroxy-2-naphthoate biosynthesis; 1,4-dihydroxy-2-naphthoate from chorismate: step 2/7. Its pathway is cofactor biosynthesis; phylloquinone biosynthesis. In terms of biological role, catalyzes the thiamine diphosphate-dependent decarboxylation of 2-oxoglutarate and the subsequent addition of the resulting succinic semialdehyde-thiamine pyrophosphate anion to isochorismate to yield 2-succinyl-5-enolpyruvyl-6-hydroxy-3-cyclohexene-1-carboxylate (SEPHCHC). The polypeptide is 2-succinyl-5-enolpyruvyl-6-hydroxy-3-cyclohexene-1-carboxylate synthase (Thermosynechococcus vestitus (strain NIES-2133 / IAM M-273 / BP-1)).